Consider the following 114-residue polypeptide: Superoxide dismutase [Cu-Zn] (114 aa).

Residues His-37, His-39, and His-54 each coordinate Cu cation. Positions Cys-48–Gly-76 are disordered. His-54, His-62, His-71, and Asp-74 together coordinate Zn(2+). Residues Arg-58 to Gly-73 are compositionally biased toward basic and acidic residues. His-111 is a Cu cation binding site.

The protein belongs to the Cu-Zn superoxide dismutase family. Homodimer. Cu cation is required as a cofactor. The cofactor is Zn(2+).

The protein localises to the cytoplasm. The catalysed reaction is 2 superoxide + 2 H(+) = H2O2 + O2. Functionally, destroys radicals which are normally produced within the cells and which are toxic to biological systems. This is Superoxide dismutase [Cu-Zn] from Drosophila obscura (Fruit fly).